Reading from the N-terminus, the 570-residue chain is MPFKMSRAAYASMFGPTTGDKVRLADTELFIEVEKDFTHYGDEVKFGGGKVIRDGMGQSQATRVDGAVDTVITNALIVDHWGIVKADIGLKDGRIVAIGKAGNPDTQPGVNIIVGPGTEAIAGEGKIVTAGGMDSHIHFICPQQIEEALMSGLTCMLGGGTGPAHGTLATTCTPGPWHIARMIEAADAFPMNLAFAGKGNASLPGALEEMVLGGACALKLHEDWGTTPGAVDCCLSVADDYDVQVMIHTDTLNESGFVEDSIGAIKGRTIHAFHTEGAGGGHAPDIIKICGQPNVIPSSTNPTRPYTINTLAEHLDMLMVCHHLSPSIPEDIAFAESRIRKETIAAEDILHDIGAFSIISSDSQAMGRVGEVAIRTWQTADKMKRQRGRLPSETGENDNMRVKRYIAKYTINPAIAHGLSHEIGSIEIGKRADLVIWNPAFFGVKPDMVLLGGSIAAAPMGDPNASIPTPQPVHYRHMFGAYGKARTNSSVTFVSQASLDVGLAARLGVSKQLLAVKNTRGGISKASMIHNSLTPHIEVDPETYEVRADGELLTCEPATVLPMAQRYFLF.

A Urease domain is found at 131–570 (GGMDSHIHFI…LPMAQRYFLF (440 aa)). Positions 136, 138, and 219 each coordinate Ni(2+). N6-carboxylysine is present on Lys-219. Residue His-221 participates in substrate binding. Positions 248 and 274 each coordinate Ni(2+). The active-site Proton donor is the His-322. Asp-362 is a Ni(2+) binding site.

Belongs to the metallo-dependent hydrolases superfamily. Urease alpha subunit family. As to quaternary structure, heterotrimer of UreA (gamma), UreB (beta) and UreC (alpha) subunits. Three heterotrimers associate to form the active enzyme. The cofactor is Ni cation. Post-translationally, carboxylation allows a single lysine to coordinate two nickel ions.

Its subcellular location is the cytoplasm. The catalysed reaction is urea + 2 H2O + H(+) = hydrogencarbonate + 2 NH4(+). It participates in nitrogen metabolism; urea degradation; CO(2) and NH(3) from urea (urease route): step 1/1. The polypeptide is Urease subunit alpha (Allorhizobium ampelinum (strain ATCC BAA-846 / DSM 112012 / S4) (Agrobacterium vitis (strain S4))).